The sequence spans 514 residues: RNA polymerase sigma factor SigA (514 aa).

Basic residues predominate over residues 135-159 (AAKKATAKKAAAKKTTAKKTAAKKS). Positions 135 to 205 (AAKKATAKKA…SDDDEDDAPA (71 aa)) are disordered. Positions 281–351 (LLEANLRLVV…TRAMADQART (71 aa)) are sigma-70 factor domain-2. Positions 305-308 (DLIQ) match the Interaction with polymerase core subunit RpoC motif. The segment at 360-436 (EVINKLARVQ…DSEAVVPADA (77 aa)) is sigma-70 factor domain-3. The tract at residues 449-502 (VLDTLSEREAGVVSMRFGLTDGQPKTLDEIGKVYGVTRERIRQIESKTMSKLRH) is sigma-70 factor domain-4. The segment at residues 475-494 (LDEIGKVYGVTRERIRQIES) is a DNA-binding region (H-T-H motif).

It belongs to the sigma-70 factor family. RpoD/SigA subfamily. In terms of assembly, interacts transiently with the RNA polymerase catalytic core.

It localises to the cytoplasm. In terms of biological role, sigma factors are initiation factors that promote the attachment of RNA polymerase to specific initiation sites and are then released. This sigma factor is the primary sigma factor during exponential growth. This chain is RNA polymerase sigma factor SigA, found in Streptomyces griseus.